The sequence spans 173 residues: Inorganic pyrophosphatase (173 aa).

Residues Lys-29, Arg-43, and Tyr-55 each contribute to the substrate site. Mg(2+) is bound by residues Asp-65, Asp-70, and Asp-102. Tyr-141 lines the substrate pocket.

This sequence belongs to the PPase family. In terms of assembly, homohexamer. Mg(2+) serves as cofactor.

The protein resides in the cytoplasm. The catalysed reaction is diphosphate + H2O = 2 phosphate + H(+). Catalyzes the hydrolysis of inorganic pyrophosphate (PPi) forming two phosphate ions. This is Inorganic pyrophosphatase from Rickettsia felis (strain ATCC VR-1525 / URRWXCal2) (Rickettsia azadi).